The following is a 113-amino-acid chain: Ig heavy chain V-III region E109 (113 aa).

The region spanning 1–113 is the Ig-like domain; the sequence is EVKLEESGGG…YWGQGTLVTV (113 aa). A disulfide bond links cysteine 22 and cysteine 98.

This Mus musculus (Mouse) protein is Ig heavy chain V-III region E109.